The following is a 457-amino-acid chain: Tubulin beta chain (457 aa).

GTP-binding residues include Gln-11, Glu-69, Ser-138, Gly-142, Thr-143, Gly-144, Asn-204, and Asn-226. Glu-69 is a Mg(2+) binding site. Ser-278 and Ser-280 each carry phosphoserine. The tract at residues 423–457 (QQYQEATVEDDEEVDENGDFGAPQNQDEPITENFE) is disordered. Residues 429–440 (TVEDDEEVDENG) show a composition bias toward acidic residues.

Belongs to the tubulin family. In terms of assembly, dimer of alpha and beta chains. A typical microtubule is a hollow water-filled tube with an outer diameter of 25 nm and an inner diameter of 15 nM. Alpha-beta heterodimers associate head-to-tail to form protofilaments running lengthwise along the microtubule wall with the beta-tubulin subunit facing the microtubule plus end conferring a structural polarity. Microtubules usually have 13 protofilaments but different protofilament numbers can be found in some organisms and specialized cells. The cofactor is Mg(2+).

It is found in the cytoplasm. It localises to the cytoskeleton. Tubulin is the major constituent of microtubules, a cylinder consisting of laterally associated linear protofilaments composed of alpha- and beta-tubulin heterodimers. Microtubules grow by the addition of GTP-tubulin dimers to the microtubule end, where a stabilizing cap forms. Below the cap, tubulin dimers are in GDP-bound state, owing to GTPase activity of alpha-tubulin. The protein is Tubulin beta chain (TUB2) of Saccharomyces cerevisiae (strain ATCC 204508 / S288c) (Baker's yeast).